The sequence spans 159 residues: Sulfur carrier protein DsrE2 (159 aa).

A run of 2 helical transmembrane segments spans residues 21–43 (PFIL…TFYG) and 72–91 (WFPV…TAMM).

Its subcellular location is the cell membrane. It participates in energy metabolism; sulfur metabolism. In terms of biological role, sulfur carrier protein probably involved in sulfur trafficking for oxidative dissimilatory sulfur metabolism. May be a component of a cytoplasmic sulfur relay system delivering sulfur to DsrC. Binds sulfur in the presence of sulfide in vitro. This chain is Sulfur carrier protein DsrE2, found in Allochromatium vinosum (strain ATCC 17899 / DSM 180 / NBRC 103801 / NCIMB 10441 / D) (Chromatium vinosum).